Here is a 221-residue protein sequence, read N- to C-terminus: Cutinase 3 (221 aa).

An N-terminal signal peptide occupies residues 1-17; that stretch reads MRFHTILLAALASLVIA. Disulfide bonds link C44/C122 and C70/C84. Residue S133 is the Nucleophile of the active site. An intrachain disulfide couples C184 to C191. Residue D188 is part of the active site. The active-site Proton donor/acceptor is H201.

This sequence belongs to the cutinase family.

The protein localises to the secreted. The catalysed reaction is cutin + H2O = cutin monomers.. Functionally, catalyzes the hydrolysis of complex carboxylic polyesters found in the cell wall of plants. Degrades cutin, a macromolecule that forms the structure of the plant cuticle. Also degrades suberin, a specialized macromolecule found in the cell wall of various plant tissues. This chain is Cutinase 3, found in Emericella nidulans (strain FGSC A4 / ATCC 38163 / CBS 112.46 / NRRL 194 / M139) (Aspergillus nidulans).